The primary structure comprises 314 residues: MERLIFYITLITFIFLLFLYPIFIKWLKKRQFGQYIRKEGPDLHNYKQGTPTMGGILFILAIFFLSLLTYFIQKEDLFLIIGVASLLFGFIGFLDDYLSIKKKDSTGLTAIQKLLLQFLFSIVIVYLISIFNNHSTLKIPFTTKSLDLKFFYPLWGIIYLTGMSNATNLTDGIDGLSGGIYVISALFTALIAGINFNHIPLLILPVIAYLFYNIKPAKIFMGDTGSLALGGILGSLALYYSVELFTILTCFIFISEMFSVIIQVGSFKVRKKRVFLMAPIHHHFELKKWSEERIVLIFWTINILTGIVALGGVL.

The next 10 membrane-spanning stretches (helical) occupy residues 4-24 (LIFYITLITFIFLLFLYPIFI), 52-72 (TMGGILFILAIFFLSLLTYFI), 77-97 (LFLIIGVASLLFGFIGFLDDY), 111-131 (IQKLLLQFLFSIVIVYLISIF), 146-166 (LDLKFFYPLWGIIYLTGMSNA), 169-189 (LTDGIDGLSGGIYVISALFTA), 191-211 (IAGINFNHIPLLILPVIAYLF), 219-239 (IFMGDTGSLALGGILGSLALY), 242-262 (VELFTILTCFIFISEMFSVII), and 294-314 (IVLIFWTINILTGIVALGGVL).

It belongs to the glycosyltransferase 4 family. MraY subfamily. It depends on Mg(2+) as a cofactor.

It localises to the cell inner membrane. The enzyme catalyses UDP-N-acetyl-alpha-D-muramoyl-L-alanyl-gamma-D-glutamyl-meso-2,6-diaminopimeloyl-D-alanyl-D-alanine + di-trans,octa-cis-undecaprenyl phosphate = di-trans,octa-cis-undecaprenyl diphospho-N-acetyl-alpha-D-muramoyl-L-alanyl-D-glutamyl-meso-2,6-diaminopimeloyl-D-alanyl-D-alanine + UMP. Its pathway is cell wall biogenesis; peptidoglycan biosynthesis. Catalyzes the initial step of the lipid cycle reactions in the biosynthesis of the cell wall peptidoglycan: transfers peptidoglycan precursor phospho-MurNAc-pentapeptide from UDP-MurNAc-pentapeptide onto the lipid carrier undecaprenyl phosphate, yielding undecaprenyl-pyrophosphoryl-MurNAc-pentapeptide, known as lipid I. The polypeptide is Phospho-N-acetylmuramoyl-pentapeptide-transferase (Petrotoga mobilis (strain DSM 10674 / SJ95)).